Reading from the N-terminus, the 607-residue chain is Probable CoA ligase CCL8 (607 aa).

Residues 236-244 (TSGTTGKPK), 391-396 (ERYGMT), Asp-474, 486-489 (ILGR), and Lys-591 contribute to the ATP site. The tract at residues 305–391 (SVRGIWQRWR…QTITGHRLLE (87 aa)) is SBD1. Residues 392-453 (RYGMTEFVMA…VRSPSLFKEY (62 aa)) form an SBD2 region.

The protein belongs to the ATP-dependent AMP-binding enzyme family. In terms of tissue distribution, mostly expressed at low levels in glandular trichomes (lupulin glands) after flowering, and, to a lower extent, in stems, leaves, flowers and cones.

The protein resides in the cytoplasm. Its subcellular location is the cytosol. This Humulus lupulus (European hop) protein is Probable CoA ligase CCL8.